Consider the following 235-residue polypeptide: NAD(P)H-quinone oxidoreductase subunit K, chloroplastic (235 aa).

The [4Fe-4S] cluster site is built by Cys-43, Cys-44, Cys-108, and Cys-139.

This sequence belongs to the complex I 20 kDa subunit family. NDH is composed of at least 16 different subunits, 5 of which are encoded in the nucleus. [4Fe-4S] cluster serves as cofactor.

The protein resides in the plastid. It is found in the chloroplast thylakoid membrane. It carries out the reaction a plastoquinone + NADH + (n+1) H(+)(in) = a plastoquinol + NAD(+) + n H(+)(out). The catalysed reaction is a plastoquinone + NADPH + (n+1) H(+)(in) = a plastoquinol + NADP(+) + n H(+)(out). Functionally, NDH shuttles electrons from NAD(P)H:plastoquinone, via FMN and iron-sulfur (Fe-S) centers, to quinones in the photosynthetic chain and possibly in a chloroplast respiratory chain. The immediate electron acceptor for the enzyme in this species is believed to be plastoquinone. Couples the redox reaction to proton translocation, and thus conserves the redox energy in a proton gradient. This is NAD(P)H-quinone oxidoreductase subunit K, chloroplastic from Ipomoea purpurea (Common morning glory).